A 429-amino-acid chain; its full sequence is MSLKLEVKTEIKLDYQDFQNQINEFHKRINDKNSPDIIFLGWNNFPEVAINPQEIARMRKIVENLHQNSINVLVVIGIGGSYLGAKAALDFILGLGPFENKPEVIFLGNSLSSTDLYQKIEYLKTKNFAINVISKSGSTIEPAITFQILYQFLIDQIGEKLAKTRTFVTTSIKSGELLEIAKSNELEIFEVIESIGGRFSVLSSVGFFPLLFAKINVDEIIQGAIKAHKKYSTSSISQNLAYKYALFRFLMYKNFNYKTEILISYEPFLIYFNEWWKQLFGESEGKNLKGLFPASAIFTTDLHSLGQFIQDGSKNFFQTIIYIKKPKFDLGIKKLVQFNTKINKLSGKTVSEINFQAFLATTLAHSSYGNNPNLVLEIADSSPKTFGHLVMFFEKACAMSAYLLGVNPFDQPGVESYKNELAKNLGWDR.

E282 functions as the Proton donor in the catalytic mechanism. Catalysis depends on residues H303 and K418.

The protein belongs to the GPI family.

It localises to the cytoplasm. The enzyme catalyses alpha-D-glucose 6-phosphate = beta-D-fructose 6-phosphate. The protein operates within carbohydrate biosynthesis; gluconeogenesis. It participates in carbohydrate degradation; glycolysis; D-glyceraldehyde 3-phosphate and glycerone phosphate from D-glucose: step 2/4. Catalyzes the reversible isomerization of glucose-6-phosphate to fructose-6-phosphate. The polypeptide is Glucose-6-phosphate isomerase (Mesomycoplasma hyopneumoniae (strain 232) (Mycoplasma hyopneumoniae)).